A 2620-amino-acid chain; its full sequence is Highly reducing polyketide synthase tazB (2620 aa).

The tract at residues 1 to 22 is disordered; that stretch reads MPFLNGNTTHHEAHSAEPDHGN. The region spanning 1 to 416 is the Ketosynthase family 3 (KS3) domain; the sequence is MPFLNGNTTH…GTNAHCILDD (416 aa). Residues 9–22 are compositionally biased toward basic and acidic residues; it reads THHEAHSAEPDHGN. Catalysis depends on for beta-ketoacyl synthase activity residues C166, H301, and H340. Positions 460–481 are disordered; that stretch reads GFNKFDEPRGSDSAGSNANGSH. The span at 470-481 shows a compositional bias: low complexity; that stretch reads SDSAGSNANGSH. The malonyl-CoA:ACP transacylase (MAT) domain stretch occupies residues 601 to 923; that stretch reads VFTGQGAQYA…PYLATLSRKD (323 aa). Residues 993–1128 are N-terminal hotdog fold; it reads HDLFGAPVPD…GEVSPDLKKS (136 aa). The interval 993–1313 is dehydratase (DH) domain; that stretch reads HDLFGAPVPD…LAGIRLSPFK (321 aa). In terms of domain architecture, PKS/mFAS DH spans 993 to 1318; the sequence is HDLFGAPVPD…LSPFKPESSE (326 aa). H1025 functions as the Proton acceptor; for dehydratase activity in the catalytic mechanism. Positions 1157–1318 are C-terminal hotdog fold; the sequence is TAPVDFTPVY…LSPFKPESSE (162 aa). D1225 (proton donor; for dehydratase activity) is an active-site residue. The interval 1379-1680 is methyltransferase (CMet) domain; it reads GLRESREMKD…VDFEASSSIY (302 aa). Positions 1910 to 2227 are enoyl reductase (ER) domain; the sequence is GIDSLTWVTD…TGKSIGKVTL (318 aa). The ketoreductase (KR) domain stretch occupies residues 2251–2425; sequence SFILAGGLGG…HGASVNLGAV (175 aa). The Carrier domain occupies 2539–2620; sequence EAARIIHKAL…VSLSSFTKFR (82 aa). Position 2576 is an O-(pantetheine 4'-phosphoryl)serine (S2576).

The protein operates within secondary metabolite biosynthesis. Highly reducing polyketide synthase; part of the gene cluster that mediates the biosynthesis of azaterrilone A and other azaphilones, a class of fungal metabolites characterized by a highly oxygenated pyrano-quinone bicyclic core and exhibiting a broad range of bioactivities. The first step of the pathway begins with the non-reducing polyketide synthase tazA that assembles one acetyl-CoA starter unit, five malonyl-CoA units, and catalyzes a series of Claisen condensations, methylation, PT-mediated cyclization, and finally releases the first hexaketide precursor through the R-domain. The tazA product then undergoes reduction on its terminal ketone and the following pyran-ring formation by yet undetermined enzyme(s). Dehydration and enoyl reduction, possibly involving the trans-enoyl reductase tazE leads to the next intermediate. TazD is predicted as an acetyltransferase and might catalyze the acetylation steps leading to the synthesis of azaterrilone A. Azaterrilone A is not the final product of the taz pathway and both the highly reducing polyketide synthase tazB and the dual enzyme tazHJ catalyze late steps of the pathway, leading to the production of the 2 final stereoisomers that contain additional polyketide modification whose structures have still to be determined. This is Highly reducing polyketide synthase tazB from Aspergillus terreus (strain NIH 2624 / FGSC A1156).